The chain runs to 641 residues: Chaperone protein DnaK (641 aa).

Position 198 is a phosphothreonine; by autocatalysis (T198). 3 stretches are compositionally biased toward basic and acidic residues: residues A514–E529, S540–E554, and A608–D621. 2 disordered regions span residues A514–E554 and Q604–A641. The segment covering D622–D633 has biased composition (acidic residues).

Belongs to the heat shock protein 70 family.

Functionally, acts as a chaperone. The polypeptide is Chaperone protein DnaK (Sinorhizobium medicae (strain WSM419) (Ensifer medicae)).